We begin with the raw amino-acid sequence, 1481 residues long: Cystic fibrosis transmembrane conductance regulator (1481 aa).

Topologically, residues 1-77 are cytoplasmic; the sequence is MQRSPLEKAS…KLINALRRCF (77 aa). The chain crosses the membrane as a helical span at residues 78 to 98; sequence FWRFTFYGILLYLGEVTKAVQ. The ABC transmembrane type-1 1 domain occupies 81–365; the sequence is FTFYGILLYL…WAVQTWYDSL (285 aa). The Extracellular portion of the chain corresponds to 99 to 122; that stretch reads PLLLGRIIASYDPDNKTERSIAIY. A helical transmembrane segment spans residues 123 to 146; it reads LGIGLCLLFIVRTLLLHPAIFGLH. Topologically, residues 147–195 are cytoplasmic; it reads HIGMQMRIAMFSLIYKKTLKLSSRVLDKISIGQLVSLLSNNLNKFDEGL. The helical transmembrane segment at 196 to 216 threads the bilayer; it reads ALAHFVWIAPLQVALLMGLIW. Over 217–222 the chain is Extracellular; it reads ELLQAS. Residues 223 to 243 form a helical membrane-spanning segment; it reads AFCGLGFLIVLALFQAGLGRM. The Cytoplasmic segment spans residues 244-298; that stretch reads MMKYRDQRAGKINERLVITSEMIENIQSVKAYCWEEAMEKMIENLRQTELKLTRK. Residues 299-319 traverse the membrane as a helical segment; it reads AAYVRYFNSSAFFFSGFFVVF. The Extracellular portion of the chain corresponds to 320-339; the sequence is LSVLPYALIKGIILRKIFTT. Residues 340–358 form a helical membrane-spanning segment; sequence ISFCIVLRMAVTRQFPWAV. Topologically, residues 359-858 are cytoplasmic; the sequence is QTWYDSLGAI…YLRYITLHKS (500 aa). Residues Trp-401, Ser-434, 458 to 465, and Gln-493 contribute to the ATP site; that span reads GSTGAGKT. An ABC transporter 1 domain is found at 423–646; the sequence is NDDNNLFFSN…RPDFSSKLMG (224 aa). A lipid anchor (S-palmitoyl cysteine) is attached at Cys-524. Phosphoserine occurs at positions 549 and 660. A disordered R region region spans residues 654 to 831; that stretch reads SSERRNSILT…EEINEEDLKE (178 aa). Ser-670 is subject to Phosphoserine; by PKA. Ser-686 bears the Phosphoserine mark. Lys-688 is covalently cross-linked (Glycyl lysine isopeptide (Lys-Gly) (interchain with G-Cter in ubiquitin)). 2 positions are modified to phosphoserine: Ser-700 and Ser-712. Thr-717 carries the post-translational modification Phosphothreonine. Phosphoserine occurs at positions 737, 753, 768, 790, 795, and 813. The chain crosses the membrane as a helical span at residues 859-879; that stretch reads LIFVLIWCLVIFLAEVAASLV. In terms of domain architecture, ABC transmembrane type-1 2 spans 859-1155; that stretch reads LIFVLIWCLV…AVNSSIDVDS (297 aa). Topologically, residues 880-918 are extracellular; it reads VLWLLRNTPFQDKGNSTYSRNNSYAVIITNTSSYYVFYI. N-linked (GlcNAc...) asparagine glycans are attached at residues Asn-894, Asn-900, and Asn-909. Residues 919-939 form a discontinuously helical membrane-spanning segment; sequence YVGVADTLLALGFFRGLPLVH. The Cytoplasmic segment spans residues 940 to 990; the sequence is TLITVSKILHHKMLHSVLQAPMSTLNTLKAGGILNRFSKDIAILDDLLPLT. Residues 991 to 1011 form a helical membrane-spanning segment; it reads IFDFIQLLLIVIGAIAVVSVL. The Extracellular portion of the chain corresponds to 1012–1013; it reads QP. A helical membrane pass occupies residues 1014–1034; it reads YIFLATVPVIAAFVLLRAYFL. The Cytoplasmic segment spans residues 1035 to 1095; it reads QTSQQLKQLE…TANWFLYLST (61 aa). Residues 1096-1116 form a helical membrane-spanning segment; the sequence is LRWFQMRIEMIFVIFFIAVTF. Residues 1117–1130 lie on the Extracellular side of the membrane; sequence ISILTTGEGEGTVG. The chain crosses the membrane as a helical span at residues 1131 to 1151; sequence IILTLAMNIMSTLQWAVNSSI. Topologically, residues 1152 to 1481 are cytoplasmic; it reads DVDSLMRSVS…TEEEVQETRL (330 aa). The ABC transporter 2 domain occupies 1211 to 1444; sequence MTIKDLTAKY…KSLFRQAISH (234 aa). Residues Tyr-1220 and 1245 to 1252 each bind ATP; that span reads GRTGSGKS. An interaction with GORASP2 region spans residues 1387–1481; the sequence is RALKQAFADC…TEEEVQETRL (95 aa). Cys-1396 is lipidated: S-palmitoyl cysteine. A phosphoserine mark is found at Ser-1445 and Ser-1457. Residues 1453-1481 form a disordered region; sequence HRNSSKYKSRPQIASLKEETEEEVQETRL. The segment covering 1471 to 1481 has biased composition (acidic residues); it reads ETEEEVQETRL. A PDZ-binding motif is present at residues 1479 to 1481; it reads TRL.

Belongs to the ABC transporter superfamily. ABCC family. CFTR transporter (TC 3.A.1.202) subfamily. As to quaternary structure, monomer; does not require oligomerization for channel activity. May form oligomers in the membrane. Interacts with SLC26A3, SLC26A6 and NHERF1. Interacts with SHANK2. Interacts with MYO6. Interacts (via C-terminus) with GOPC (via PDZ domain); this promotes CFTR internalization and thereby decreases channel activity. Interacts with SLC4A7 through NHERF1. Found in a complex with MYO5B and RAB11A. Interacts with ANO1. Interacts with SLC26A8. Interacts with AHCYL1; the interaction increases CFTR activity. Interacts with CSE1L. The core-glycosylated form interacts with GORASP2 (via PDZ GRASP-type 1 domain) in respone to ER stress. Interacts with MARCHF2; the interaction leads to CFTR ubiqtuitination and degradation. Interacts with ADGRG2. In terms of processing, N-glycosylated. Post-translationally, phosphorylated; cAMP treatment promotes phosphorylation and activates the channel. Dephosphorylation decreases the ATPase activity (in vitro). Phosphorylation at PKA sites activates the channel. Phosphorylation at PKC sites enhances the response to phosphorylation by PKA. Phosphorylated by AMPK; this inhibits channel activity. Ubiquitinated, leading to its degradation in the lysosome. Deubiquitination by USP10 in early endosomes enhances its endocytic recycling to the cell membrane. Ubiquitinated by RNF185 during ER stress. Ubiquitinated by MARCHF2.

The protein resides in the apical cell membrane. It is found in the early endosome membrane. It localises to the cell membrane. Its subcellular location is the recycling endosome membrane. The protein localises to the endoplasmic reticulum membrane. The protein resides in the nucleus. The enzyme catalyses ATP + H2O + closed Cl(-) channel = ADP + phosphate + open Cl(-) channel.. It carries out the reaction chloride(in) = chloride(out). The catalysed reaction is hydrogencarbonate(in) = hydrogencarbonate(out). It catalyses the reaction ATP + H2O = ADP + phosphate + H(+). Functionally, epithelial ion channel that plays an important role in the regulation of epithelial ion and water transport and fluid homeostasis. Mediates the transport of chloride ions across the cell membrane. Possesses an intrinsic ATPase activity and utilizes ATP to gate its channel; the passive flow of anions through the channel is gated by cycles of ATP binding and hydrolysis by the ATP-binding domains. The ion channel is also permeable to HCO(3)(-); selectivity depends on the extracellular chloride concentration. Exerts its function also by modulating the activity of other ion channels and transporters. Contributes to the regulation of the pH and the ion content of the epithelial fluid layer. Modulates the activity of the epithelial sodium channel (ENaC) complex, in part by regulating the cell surface expression of the ENaC complex. May regulate bicarbonate secretion and salvage in epithelial cells by regulating the transporter SLC4A7. Can inhibit the chloride channel activity of ANO1. Plays a role in the chloride and bicarbonate homeostasis during sperm epididymal maturation and capacitation. This is Cystic fibrosis transmembrane conductance regulator from Callithrix jacchus (White-tufted-ear marmoset).